A 273-amino-acid chain; its full sequence is Esterase pigG (273 aa).

Residues S122, D215, and H243 each act as charge relay system in the active site.

Belongs to the LovG family.

It functions in the pathway secondary metabolite biosynthesis. In terms of biological role, esterase; part of the gene cluster that mediates the biosynthesis of azaphilone pigments (MonAzPs), a complex mixture of compounds with a common azaphilone skeleton very widely used as food colorants. Within the pathway, pigG may assist the nrPKS pigA in the biosynthesis of the hexaketide precursor. The first step of the pathway is performed by the nrPKS pigA that forms the hexaketide precursor from successive condensations of five malonyl-CoA units, with a simple acetyl-CoA starter unit. The role of esterase pigG is not clear, but it may play at most a supplementary role in the formation of the benzaldehyde produced by the pigA nrPKS. This very reactive benzaldehyde is intercepted by the pigC ketoreductase that to provide the first stable enzyme-free MonAzPs intermediate, 6-(4-hydroxy-2-oxopentyl)-3-methyl-2,4-dioxocyclohexane carbaldehyde, also known as M7PKS-1. The FAD-dependent monooxygenase pigN hydroxylates M7PKS-1 at C-4, which triggers the formation of the pyran ring. PigJ, pigK and pigD are involved in the acetylation of the pyran ring. PigJ and pigK form the two subunits of a dedicated fungal FAS that produces the side chain fatty acyl moiety of MonAzPs and pigD transfers the fatty acyl chain to the C-4 alcohol. PigM and pigO are involved in the elimination of the omega-1 alcohol. PigM acts as an O-acetyltransferase that synthesizes the putative O-11 acetyl intermediate whereas pigO eliminates acetic acid to yield an intermediate with a C10(11) double bond. The dehydration of the C-11 alcohol followed by the reduction of the C6(7) double bond by the NAD(P)H-dependent oxidoreductase pigE increases the electrophilicity of the C-5 ketone of the resulting acyl benzopyran. This in turn sets up the C-5 ketone for an intramolecular Knoevenagel aldol condensation with the C-20 enol of the side chain. This condensation affords the characteristic linear tricyclic carbon skeletons of the yellow pigments that serve as the common precursors for the classical yellow pigments monascin and ankaflavin, orange pigments rubopunctatin and monascorubrin, and red pigments ribropunctamine and monascorubramine. The FAD-dependent oxidoreductase pigF is especially invoved in the biosynthesis of orange and red pigments via desaturation of C6(7). The protein is Esterase pigG of Monascus ruber (Mold).